A 714-amino-acid chain; its full sequence is Hormonally up-regulated neu tumor-associated kinase (714 aa).

Over residues Met-1–Ala-15 the composition is skewed to low complexity. The tract at residues Met-1–Ala-26 is disordered. Residues Leu-62 to Leu-320 enclose the Protein kinase domain. ATP is bound by residues Leu-68–Val-76 and Lys-91. Asp-186 functions as the Proton acceptor in the catalytic mechanism. Basic and acidic residues predominate over residues Lys-437 to Leu-461. Disordered stretches follow at residues Lys-437–Leu-471, Met-518–Asp-552, and Ala-590–Leu-615. Positions Leu-599–Leu-611 are enriched in low complexity.

This sequence belongs to the protein kinase superfamily. CAMK Ser/Thr protein kinase family. SNF1 subfamily.

It catalyses the reaction L-seryl-[protein] + ATP = O-phospho-L-seryl-[protein] + ADP + H(+). The catalysed reaction is L-threonyl-[protein] + ATP = O-phospho-L-threonyl-[protein] + ADP + H(+). The chain is Hormonally up-regulated neu tumor-associated kinase (HUNK) from Homo sapiens (Human).